The following is a 61-amino-acid chain: Small ribosomal subunit protein uS14 (61 aa).

C24, C27, C40, and C43 together coordinate Zn(2+).

It belongs to the universal ribosomal protein uS14 family. Zinc-binding uS14 subfamily. As to quaternary structure, part of the 30S ribosomal subunit. Contacts proteins S3 and S10. It depends on Zn(2+) as a cofactor.

Functionally, binds 16S rRNA, required for the assembly of 30S particles and may also be responsible for determining the conformation of the 16S rRNA at the A site. This chain is Small ribosomal subunit protein uS14, found in Desulfatibacillum aliphaticivorans.